The primary structure comprises 854 residues: Periodic tryptophan protein 2 homolog (854 aa).

13 WD repeats span residues 9–52 (NLVG…TFPF), 53–93 (ENHK…LHYF), 94–132 (NFKSPVGAIEFSPNGKFFAVSLGKLIQVWRTPNSLEERE), 144–183 (GHFDDIVSISWSADSRFFISTSKDLTARLHSVDPIEGFHP), 188–227 (GHKNTVVSGFFSKDQQTIYTVSKDGALFVWKYSPLFQAGE), 252–291 (NQNSKLRCAAFHPTSNLLVVGFSSGLFGIYELPSFTMLYQ), 294–334 (ITQS…YVLK), 337–376 (SHYDALSTLQYSSDGQRIITGADDGKIKVWDMNSGFCIVT), 379–418 (QHTSAVSGLCFSKRGNVLFSSSLDGSVRAWDLIRYRNFRT), 422–464 (PSRV…ETLA), 465–504 (GHEGPVSSLSFNSSGSLLASGSWDKTVRIWDIFSRSGIVE), 507–546 (PIPSDVLSLAFHPDGKEVCVASLDGQLTFWNVQEGKQTSL), and 569–608 (SLNKTFTSICYSADGSCVLSAGTSKYVCLYDIITGVLIKK). Thr-640 carries the post-translational modification Phosphothreonine. The residue at position 645 (Ser-645) is a Phosphoserine. A WD 14 repeat occupies 668 to 709 (TRPEIICHGVQFSPSGGAFAAATTEGLMIYSLYNDFLFDPIN).

The protein belongs to the WD repeat PWP2 family.

This chain is Periodic tryptophan protein 2 homolog, found in Schizosaccharomyces pombe (strain 972 / ATCC 24843) (Fission yeast).